Reading from the N-terminus, the 585-residue chain is A-type ATP synthase subunit A (585 aa).

231 to 238 (GPFGSGKT) serves as a coordination point for ATP.

Belongs to the ATPase alpha/beta chains family. Has multiple subunits with at least A(3), B(3), C, D, E, F, H, I and proteolipid K(x).

The protein localises to the cell membrane. It catalyses the reaction ATP + H2O + 4 H(+)(in) = ADP + phosphate + 5 H(+)(out). In terms of biological role, produces ATP from ADP in the presence of a proton gradient across the membrane. The archaeal alpha chain is a catalytic subunit. Its function is as follows. Component of the A-type ATP synthase that produces ATP from ADP in the presence of a proton gradient across the membrane. The A chain is the catalytic subunit. The polypeptide is A-type ATP synthase subunit A (Thermococcus sp. (strain KI)).